The primary structure comprises 174 residues: Shikimate kinase 2 (174 aa).

12 to 17 (GCGKTT) is an ATP binding site. Residues T16 and D32 each contribute to the Mg(2+) site. Residues D34, R58, and G79 each contribute to the substrate site. The interval 112-126 (QAAPEEDLRPTLTGK) is LID domain. An ATP-binding site is contributed by R120. Residue R139 participates in substrate binding.

It belongs to the shikimate kinase family. AroL subfamily. In terms of assembly, monomer. Mg(2+) is required as a cofactor.

It localises to the cytoplasm. It catalyses the reaction shikimate + ATP = 3-phosphoshikimate + ADP + H(+). The protein operates within metabolic intermediate biosynthesis; chorismate biosynthesis; chorismate from D-erythrose 4-phosphate and phosphoenolpyruvate: step 5/7. In terms of biological role, catalyzes the specific phosphorylation of the 3-hydroxyl group of shikimic acid using ATP as a cosubstrate. This chain is Shikimate kinase 2, found in Escherichia coli O81 (strain ED1a).